The following is a 457-amino-acid chain: Adenylosuccinate synthetase (457 aa).

GTP contacts are provided by residues 45 to 51 (GDEGKGK) and 73 to 75 (GHT). Aspartate 46 serves as the catalytic Proton acceptor. Residues aspartate 46 and glycine 73 each coordinate Mg(2+). IMP contacts are provided by residues 46 to 49 (DEGK), 71 to 74 (NAGH), threonine 163, arginine 177, asparagine 255, threonine 270, and arginine 334. The active-site Proton donor is histidine 74. 330 to 336 (VTTKRVR) serves as a coordination point for substrate. Residues arginine 336, 362 to 364 (KLD), and 444 to 446 (GVG) contribute to the GTP site.

This sequence belongs to the adenylosuccinate synthetase family. Homodimer. Requires Mg(2+) as cofactor.

The protein resides in the cytoplasm. It catalyses the reaction IMP + L-aspartate + GTP = N(6)-(1,2-dicarboxyethyl)-AMP + GDP + phosphate + 2 H(+). Its pathway is purine metabolism; AMP biosynthesis via de novo pathway; AMP from IMP: step 1/2. In terms of biological role, plays an important role in the de novo pathway and in the salvage pathway of purine nucleotide biosynthesis. Catalyzes the first committed step in the biosynthesis of AMP from IMP. This Aedes aegypti (Yellowfever mosquito) protein is Adenylosuccinate synthetase.